The chain runs to 70 residues: Putative membrane protein insertion efficiency factor (70 aa).

This sequence belongs to the UPF0161 family.

It localises to the cell membrane. Functionally, could be involved in insertion of integral membrane proteins into the membrane. This Symbiobacterium thermophilum (strain DSM 24528 / JCM 14929 / IAM 14863 / T) protein is Putative membrane protein insertion efficiency factor.